A 246-amino-acid chain; its full sequence is 4'-phosphopantetheinyl transferase Svp (246 aa).

The segment covering 223-232 has biased composition (low complexity); the sequence is AGTAEESAEG. The disordered stretch occupies residues 223 to 246; sequence AGTAEESAEGAGKEATADDRTAVP. The segment covering 233 to 246 has biased composition (basic and acidic residues); it reads AGKEATADDRTAVP.

This sequence belongs to the P-Pant transferase superfamily. Gsp/Sfp/HetI/AcpT family.

It catalyses the reaction apo-[ACP] + CoA = holo-[ACP] + adenosine 3',5'-bisphosphate + H(+). Its function is as follows. Transfers the 4'-phosphopantetheine moiety from coenzyme A to a Ser of an acyl-carrier-protein. The enzyme is able to transfer the cofactor to a broad range of enzymes with acyl- or peptidyl-carrier protein domains. This chain is 4'-phosphopantetheinyl transferase Svp (svp), found in Streptomyces mobaraensis (Streptoverticillium mobaraense).